The following is a 495-amino-acid chain: Glycerol kinase (495 aa).

Residue threonine 13 participates in ADP binding. ATP contacts are provided by threonine 13, threonine 14, and serine 15. Residue threonine 13 participates in sn-glycerol 3-phosphate binding. Arginine 17 contributes to the ADP binding site. 4 residues coordinate sn-glycerol 3-phosphate: arginine 83, glutamate 84, tyrosine 135, and aspartate 244. Positions 83, 84, 135, 244, and 245 each coordinate glycerol. ADP-binding residues include threonine 266 and glycine 309. Residues threonine 266, glycine 309, glutamine 313, and glycine 410 each coordinate ATP. ADP-binding residues include glycine 410 and asparagine 414.

Belongs to the FGGY kinase family.

The catalysed reaction is glycerol + ATP = sn-glycerol 3-phosphate + ADP + H(+). The protein operates within polyol metabolism; glycerol degradation via glycerol kinase pathway; sn-glycerol 3-phosphate from glycerol: step 1/1. With respect to regulation, inhibited by fructose 1,6-bisphosphate (FBP). Its function is as follows. Key enzyme in the regulation of glycerol uptake and metabolism. Catalyzes the phosphorylation of glycerol to yield sn-glycerol 3-phosphate. This is Glycerol kinase from Shewanella woodyi (strain ATCC 51908 / MS32).